Here is a 157-residue protein sequence, read N- to C-terminus: Crossover junction endodeoxyribonuclease RuvC (157 aa).

Residues aspartate 7, glutamate 66, and aspartate 139 contribute to the active site. Mg(2+) is bound by residues aspartate 7, glutamate 66, and aspartate 139.

It belongs to the RuvC family. In terms of assembly, homodimer which binds Holliday junction (HJ) DNA. The HJ becomes 2-fold symmetrical on binding to RuvC with unstacked arms; it has a different conformation from HJ DNA in complex with RuvA. In the full resolvosome a probable DNA-RuvA(4)-RuvB(12)-RuvC(2) complex forms which resolves the HJ. The cofactor is Mg(2+).

The protein localises to the cytoplasm. It carries out the reaction Endonucleolytic cleavage at a junction such as a reciprocal single-stranded crossover between two homologous DNA duplexes (Holliday junction).. Functionally, the RuvA-RuvB-RuvC complex processes Holliday junction (HJ) DNA during genetic recombination and DNA repair. Endonuclease that resolves HJ intermediates. Cleaves cruciform DNA by making single-stranded nicks across the HJ at symmetrical positions within the homologous arms, yielding a 5'-phosphate and a 3'-hydroxyl group; requires a central core of homology in the junction. The consensus cleavage sequence is 5'-(A/T)TT(C/G)-3'. Cleavage occurs on the 3'-side of the TT dinucleotide at the point of strand exchange. HJ branch migration catalyzed by RuvA-RuvB allows RuvC to scan DNA until it finds its consensus sequence, where it cleaves and resolves the cruciform DNA. This is Crossover junction endodeoxyribonuclease RuvC from Campylobacter curvus (strain 525.92).